We begin with the raw amino-acid sequence, 596 residues long: (E)-beta-ocimene synthase, chloroplastic (596 aa).

A chloroplast-targeting transit peptide spans 1 to 35 (MAITHYQMASFQSSFHFCMLRKTLRQKSSLHFAKR). Residues R307, D344, D348, R485, and N488 each contribute to the (2E)-geranyl diphosphate site. Residues D344 and D348 each contribute to the Mg(2+) site. Residues 344-348 (DDIYD) carry the DDXXD motif motif. Residues N488, A492, and E496 each coordinate Mg(2+).

Belongs to the terpene synthase family. Tpsb subfamily. The cofactor is Mg(2+). Requires Mn(2+) as cofactor. Highly expressed in leaves, stems and disk florets. Detected in roots.

It localises to the plastid. The protein localises to the chloroplast. The enzyme catalyses (2E)-geranyl diphosphate = (E)-beta-ocimene + diphosphate. The protein operates within secondary metabolite biosynthesis; terpenoid biosynthesis. Functionally, monoterpene synthase involved in the biosynthesis of (E)-beta-ocimene as the major product and trace amounts of (Z)-beta-ocimene. Can only accept geranyl diphosphate as substrate. The sequence is that of (E)-beta-ocimene synthase, chloroplastic from Matricaria chamomilla var. recutita (German chamomile).